Here is a 518-residue protein sequence, read N- to C-terminus: Efflux pump terJ (518 aa).

A helical membrane pass occupies residues 43–63 (IAFIVVVCMAQLVSQAGLGQV). The N-linked (GlcNAc...) asparagine glycan is linked to N79. 12 consecutive transmembrane segments (helical) span residues 82 to 102 (QLSW…LGAG), 112 to 132 (LLFT…AFAE), 135 to 155 (GPVF…FLLP), 177 to 197 (AFGS…ALAA), 204 to 224 (WGFW…IFWV), 244 to 264 (IAGC…LNMA), 272 to 292 (PYIY…GYIE), 311 to 331 (FVLA…FYGW), 339 to 359 (GISP…GFVA), 364 to 384 (GLIL…AAFC), 400 to 420 (WAQL…SFPA), and 439 to 459 (SLVA…GAIV). Residue N466 is glycosylated (N-linked (GlcNAc...) asparagine). Residues 477-497 (AWYLGVGLAASGIILTMFFAL) form a helical membrane-spanning segment.

The protein belongs to the major facilitator superfamily.

The protein resides in the cell membrane. Its function is as follows. Efflux pump that might be required for efficient secretion of terrein or other secondary metabolies produced by the terrein genne cluster. This Aspergillus terreus (strain NIH 2624 / FGSC A1156) protein is Efflux pump terJ.